Here is a 653-residue protein sequence, read N- to C-terminus: 23S rRNA 5-hydroxycytidine C2501 synthase (653 aa).

Belongs to the peptidase U32 family. As to quaternary structure, interacts with precursors of the 50S ribosomal subunit.

Iron-sulfur clusters and prephenate are required for ho5C2501 formation. In terms of biological role, responsible for the formation of the 5-hydroxycytidine modification at the C2501 position (ho5C2501) of 23S rRNA. May be a Fe-S protein that catalyzes ho5C2501 formation using prephenate as a hydroxyl group donor. In Escherichia coli (strain K12), this protein is 23S rRNA 5-hydroxycytidine C2501 synthase.